Reading from the N-terminus, the 70-residue chain is Acyl carrier protein (70 aa).

One can recognise a Carrier domain in the interval 2-70; that stretch reads SDIADRVKKI…ETIQTFGDAP (69 aa). Position 37 is an O-(pantetheine 4'-phosphoryl)serine (Ser-37).

Belongs to the acyl carrier protein (ACP) family. In terms of processing, 4'-phosphopantetheine is transferred from CoA to a specific serine of apo-ACP by AcpS. This modification is essential for activity because fatty acids are bound in thioester linkage to the sulfhydryl of the prosthetic group.

The protein resides in the cytoplasm. Its pathway is lipid metabolism; fatty acid biosynthesis. Its function is as follows. Carrier of the growing fatty acid chain in fatty acid biosynthesis. The protein is Acyl carrier protein of Cereibacter sphaeroides (Rhodobacter sphaeroides).